Reading from the N-terminus, the 493-residue chain is Extracellular tyrosine-protein kinase PKDCC (493 aa).

A signal peptide spans Met-1–Pro-32. A disordered region spans residues Pro-28–Pro-128. Residues Ser-30–Gly-46 show a composition bias toward pro residues. The span at Gly-52–Arg-69 shows a compositional bias: basic and acidic residues. Pro residues-rich tracts occupy residues Pro-95–Ala-105 and Gly-114–Gly-127. The N-linked (GlcNAc...) asparagine glycan is linked to Asn-137. The Protein kinase domain occupies Val-138–Gly-493. ATP is bound by residues Met-144–Val-152 and Lys-166. The residue at position 148 (Tyr-148) is a Phosphotyrosine. At Ser-177 the chain carries Phosphoserine. Catalysis depends on Asp-278, which acts as the Proton acceptor. N-linked (GlcNAc...) asparagine glycosylation is found at Asn-320, Asn-369, Asn-400, Asn-460, and Asn-484.

Belongs to the protein kinase superfamily. Post-translationally, N-glycosylated. In terms of processing, phosphorylated on tyrosines; probably via autophosphorylation. In terms of tissue distribution, highly expressed in platelets.

It localises to the secreted. The protein resides in the golgi apparatus. It carries out the reaction L-tyrosyl-[protein] + ATP = O-phospho-L-tyrosyl-[protein] + ADP + H(+). Secreted tyrosine-protein kinase that mediates phosphorylation of extracellular proteins and endogenous proteins in the secretory pathway, which is essential for patterning at organogenesis stages. Mediates phosphorylation of MMP1, MMP13, MMP14, MMP19 and ERP29. Probably plays a role in platelets: rapidly and quantitatively secreted from platelets in response to stimulation of platelet degranulation. May also have serine/threonine protein kinase activity. Required for longitudinal bone growth through regulation of chondrocyte differentiation. May be indirectly involved in protein transport from the Golgi apparatus to the plasma membrane. This is Extracellular tyrosine-protein kinase PKDCC from Homo sapiens (Human).